A 166-amino-acid polypeptide reads, in one-letter code: Large ribosomal subunit protein uL10 (166 aa).

Belongs to the universal ribosomal protein uL10 family. Part of the ribosomal stalk of the 50S ribosomal subunit. The N-terminus interacts with L11 and the large rRNA to form the base of the stalk. The C-terminus forms an elongated spine to which L12 dimers bind in a sequential fashion forming a multimeric L10(L12)X complex.

In terms of biological role, forms part of the ribosomal stalk, playing a central role in the interaction of the ribosome with GTP-bound translation factors. The chain is Large ribosomal subunit protein uL10 from Staphylococcus aureus (strain JH1).